The primary structure comprises 97 residues: uncharacterized protein (97 aa).

The interval 58–97 (SLLLPRTVQTGGTEREKPGPGQRKRGAHCSACKRSSTRPS) is disordered.

This is an uncharacterized protein from Homo sapiens (Human).